The following is a 677-amino-acid chain: Methionine--tRNA ligase (677 aa).

The 'HIGH' region motif lies at 15–25 (PYANGSIHLGH). Residues Cys146, Cys149, Cys159, and Cys162 each contribute to the Zn(2+) site. The short motif at 333–337 (KMSKS) is the 'KMSKS' region element. Lys336 serves as a coordination point for ATP. The tRNA-binding domain occupies 575-677 (DFAKVDLRVA…AGAKPGHQVK (103 aa)).

It belongs to the class-I aminoacyl-tRNA synthetase family. MetG type 1 subfamily. Homodimer. It depends on Zn(2+) as a cofactor.

It is found in the cytoplasm. The enzyme catalyses tRNA(Met) + L-methionine + ATP = L-methionyl-tRNA(Met) + AMP + diphosphate. Its function is as follows. Is required not only for elongation of protein synthesis but also for the initiation of all mRNA translation through initiator tRNA(fMet) aminoacylation. This chain is Methionine--tRNA ligase, found in Shigella sonnei (strain Ss046).